A 686-amino-acid polypeptide reads, in one-letter code: Polyribonucleotide nucleotidyltransferase (686 aa).

Mg(2+) contacts are provided by Asp-478 and Asp-484. The KH domain occupies 545-604 (PRVEVIQIPTDKIGLLIGPGGKTINALQDEYGVNISVENDGTVYVAGVEGMSVKAAVSAI). Residues 614–684 (GDIYVGKVVK…KQNRISLEMV (71 aa)) form the S1 motif domain.

It belongs to the polyribonucleotide nucleotidyltransferase family. Mg(2+) is required as a cofactor.

It is found in the cytoplasm. It carries out the reaction RNA(n+1) + phosphate = RNA(n) + a ribonucleoside 5'-diphosphate. Functionally, involved in mRNA degradation. Catalyzes the phosphorolysis of single-stranded polyribonucleotides processively in the 3'- to 5'-direction. This Rubrobacter xylanophilus (strain DSM 9941 / JCM 11954 / NBRC 16129 / PRD-1) protein is Polyribonucleotide nucleotidyltransferase.